The chain runs to 492 residues: Trypanothione reductase (492 aa).

Residue Asp-35 to Cys-52 participates in FAD binding. Cysteines 52 and 57 form a disulfide. The active-site Proton acceptor is the His-461.

Belongs to the class-I pyridine nucleotide-disulfide oxidoreductase family. In terms of assembly, homodimer. FAD serves as cofactor.

The protein resides in the cytoplasm. The catalysed reaction is trypanothione + NADP(+) = trypanothione disulfide + NADPH + H(+). Its function is as follows. Trypanothione is the parasite analog of glutathione; this enzyme is the equivalent of glutathione reductase. The polypeptide is Trypanothione reductase (TPR) (Trypanosoma congolense).